The chain runs to 1379 residues: MNYSTALPDFIEMQRVSFCWFIAQGLNDELTMFSRIHDFSYNTEYRLFGQEYSLVKPVYTIVRAKKLAANYSVQLVIPLEVRNKKLNSVRYFGQFTIINLPLMTTTATFVINGCERVIVSQIIRSPGIYFEKNKNHRKRKQFKSQVLGHASKLGSFLPSGVPWIIPYDQPWKPWIIGKKLGYSKYNSNKDTKLDFYFYSLKSFKIYQKISKITNSPIKVQRIKLFLQWLKLNQKEFNFKNKLNLSELSFLLNYWNFIFKFIIKYQFLYKKNFEESYQIQESEFKTIFKTWNNQPQLNDSFSLKKIDQLTSNYEKKIQFYHNVIQQQFFDNLMLVPFITKEKKILNLESLANRQKQKKISLTLLTNESIKFAFYFSPSLKEVFKYRSPKKRKPKEAKIKQPILYLRSPSKIVQFKDDHQVLDSYKKKYDTKDFYTATLIPESGSWIRFGFQKNTKINRYQYPIRHQEDEVIIQIDKITQKPILYLLKEMGLTDWEICSNLKHADFFYFTKPFLTGSLTSKQPLPRFDLHSDYYKNISEFSHIFDARYYRLGKIGRFQINNRLNLKLNNRIYTITYEDIFAILDCLVTLSISKTTGDDIDHLKNRRVRSVGELLQNLFRVGFQRLVRKLGSQINKRESGQISSFNIIGATVREFFGSSQLSQYMDQTNPLSSLTHRRRISGLGPGGLDRDRISFAVRDIHPSHYGRICPIETPEGPNVGLIASLTTCARVNKLGFIETPFWRVINGKVIKTGNPIYLTADIEDFYKIAPADISTNSKNYLTQNLIPVRYKQDFITVSPFQVDFISISPIQVVSVATSLIPFFEHDDANRALMGSNMQRQSVPLMLSQKPIVGTGLENQIAIDSGMTINAQGAGIVHSVTADYIIVKEYSGRKLKYILQKYQRSNQETCINHRPIVWKGEKIKSGQILTDGPGITNNELALGQNVLVAYMPWQGYNFEDAILINERLVYEDVFTSIHIERYDIEIEQDDDVSEQITKNIPNLSFSEIQNLNDDGIVALGTFVKPGDILVGKIIAKNDSEQLPEAKLLRAIFGAKAKGVRDTSFRMPKGKYGRVVDRVTFNRKTKLAYKFEKIQVFIAQIRKIKVGDKIAGRHGNKGIISRILPRQDMPFLPDGTPVDIILNPLGVPSRMNVGQLYECLLGIAGHKLNRRFKILPFDEMYGPEVSRILINKKLRQASIENDEAWLFNPYSPGKMVLIDGRTGKEFENPITVGNAYMLKLIHLVDDKMHARATGPYSLITQQPLGGKAQHGGQRFGEMEVWALEGFGAAFTLKELLTIKSDDMQGRNETLNAIVKGQLIPKSGVPESFKVLLQELRSIGLDMSTYKIENYNLNQHYELEVDLIETYDSLEKTFPPTSNLDDISF.

This sequence belongs to the RNA polymerase beta chain family. As to quaternary structure, in plastids the minimal PEP RNA polymerase catalytic core is composed of four subunits: alpha, beta, beta', and beta''. When a (nuclear-encoded) sigma factor is associated with the core the holoenzyme is formed, which can initiate transcription.

It is found in the plastid. The protein resides in the chloroplast. It carries out the reaction RNA(n) + a ribonucleoside 5'-triphosphate = RNA(n+1) + diphosphate. DNA-dependent RNA polymerase catalyzes the transcription of DNA into RNA using the four ribonucleoside triphosphates as substrates. This chain is DNA-directed RNA polymerase subunit beta, found in Trieres chinensis (Marine centric diatom).